Consider the following 239-residue polypeptide: Dolichyldiphosphatase (239 aa).

The Lumenal segment spans residues 1–34; the sequence is MNSTAAAINPNPNVIPFDDTYILYDSHDFLSFLS. The chain crosses the membrane as a helical span at residues 35–55; that stretch reads AYFSLMPILVLAFYLSWFIIT. The Cytoplasmic portion of the chain corresponds to 56–131; the sequence is RELEACIVAF…KIYTSWKNLN (76 aa). The chain crosses the membrane as a helical span at residues 132–152; that stretch reads FLEKCIFSGALALLSFCVCFS. The Lumenal portion of the chain corresponds to 153-164; the sequence is RVYLHYHNLDQV. The chain crosses the membrane as a helical span at residues 165–185; sequence IVGFSVGALTGSLYFFIVGII. The Cytoplasmic portion of the chain corresponds to 186-239; it reads RELGLINWFLKLRIVRLFYMTDSYNLAPLTLKENYEAYWKRINQRSFNDKSKRD.

It belongs to the dolichyldiphosphatase family.

Its subcellular location is the endoplasmic reticulum membrane. The enzyme catalyses a di-trans,poly-cis-dolichyl diphosphate + H2O = a di-trans,poly-cis-dolichyl phosphate + phosphate + H(+). It participates in protein modification; protein glycosylation. Non-essential protein which is required for efficient N-glycosylation. Necessary for maintaining optimal levels of dolichol-linked oligosaccharides. Hydrolyzes dolichyl pyrophosphate at a very high rate and dolichyl monophosphate at a much lower rate. Does not act on phosphatidate. The polypeptide is Dolichyldiphosphatase (CAX4) (Saccharomyces cerevisiae (strain ATCC 204508 / S288c) (Baker's yeast)).